The primary structure comprises 56 residues: Large ribosomal subunit protein bL33 (56 aa).

Belongs to the bacterial ribosomal protein bL33 family.

In Rickettsia bellii (strain OSU 85-389), this protein is Large ribosomal subunit protein bL33.